A 223-amino-acid chain; its full sequence is Ubiquinone biosynthesis protein COQ4 homolog 2, mitochondrial (223 aa).

The N-terminal 26 residues, 1 to 26 (MFLRRVHPVRLGHAIQRSLTTTKSRN), are a transit peptide targeting the mitochondrion. The segment covering 21–32 (TTKSRNESTTTT) has biased composition (low complexity). The segment at 21–43 (TTKSRNESTTTTVEAPQAVPSPP) is disordered. Zn(2+) is bound by residues H177, D178, H181, and E193.

It belongs to the COQ4 family. In terms of assembly, component of a multi-subunit COQ enzyme complex. Zn(2+) serves as cofactor.

It localises to the mitochondrion inner membrane. The catalysed reaction is a 4-hydroxy-3-methoxy-5-(all-trans-polyprenyl)benzoate + H(+) = a 2-methoxy-6-(all-trans-polyprenyl)phenol + CO2. Its pathway is cofactor biosynthesis; ubiquinone biosynthesis. Its function is as follows. Lyase that catalyzes the C1-decarboxylation of 4-hydroxy-3-methoxy-5-(all-trans-polyprenyl)benzoic acid into 2-methoxy-6-(all-trans-polyprenyl)phenol during ubiquinone biosynthesis. This is Ubiquinone biosynthesis protein COQ4 homolog 2, mitochondrial from Culex quinquefasciatus (Southern house mosquito).